Here is a 387-residue protein sequence, read N- to C-terminus: 4-hydroxy-3-methylbut-2-en-1-yl diphosphate synthase (flavodoxin) (387 aa).

Residues Cys-293, Cys-296, Cys-328, and Glu-335 each coordinate [4Fe-4S] cluster.

This sequence belongs to the IspG family. The cofactor is [4Fe-4S] cluster.

The catalysed reaction is (2E)-4-hydroxy-3-methylbut-2-enyl diphosphate + oxidized [flavodoxin] + H2O + 2 H(+) = 2-C-methyl-D-erythritol 2,4-cyclic diphosphate + reduced [flavodoxin]. It participates in isoprenoid biosynthesis; isopentenyl diphosphate biosynthesis via DXP pathway; isopentenyl diphosphate from 1-deoxy-D-xylulose 5-phosphate: step 5/6. Functionally, converts 2C-methyl-D-erythritol 2,4-cyclodiphosphate (ME-2,4cPP) into 1-hydroxy-2-methyl-2-(E)-butenyl 4-diphosphate. This Treponema denticola (strain ATCC 35405 / DSM 14222 / CIP 103919 / JCM 8153 / KCTC 15104) protein is 4-hydroxy-3-methylbut-2-en-1-yl diphosphate synthase (flavodoxin).